The chain runs to 220 residues: Cytidylate kinase (220 aa).

11-19 provides a ligand contact to ATP; sequence GPTASGKGT.

It belongs to the cytidylate kinase family. Type 1 subfamily.

The protein localises to the cytoplasm. The catalysed reaction is CMP + ATP = CDP + ADP. It carries out the reaction dCMP + ATP = dCDP + ADP. The sequence is that of Cytidylate kinase from Polynucleobacter asymbioticus (strain DSM 18221 / CIP 109841 / QLW-P1DMWA-1) (Polynucleobacter necessarius subsp. asymbioticus).